The following is a 155-amino-acid chain: Nucleoside diphosphate kinase, cytosolic (155 aa).

Residues Lys16, Phe64, Arg92, Thr98, Arg109, and Asn119 each coordinate ATP. The active-site Pros-phosphohistidine intermediate is His122.

This sequence belongs to the NDK family. As to quaternary structure, homohexamer. Mg(2+) is required as a cofactor.

The protein resides in the cytoplasm. The enzyme catalyses a 2'-deoxyribonucleoside 5'-diphosphate + ATP = a 2'-deoxyribonucleoside 5'-triphosphate + ADP. The catalysed reaction is a ribonucleoside 5'-diphosphate + ATP = a ribonucleoside 5'-triphosphate + ADP. Functionally, major role in the synthesis of nucleoside triphosphates other than ATP. This Dictyostelium discoideum (Social amoeba) protein is Nucleoside diphosphate kinase, cytosolic (ndkC-1).